Consider the following 282-residue polypeptide: Phospholipid phosphatase 1 (282 aa).

Over 1–6 (MFDKPR) the chain is Cytoplasmic. Residues 5 to 7 (PRL) carry the PDZ-binding; involved in localization to the apical cell membrane motif. A helical transmembrane segment spans residues 7 to 27 (LPYVVLDVICVLLAGLPFIIL). Residues 28–53 (TSRHTPFQRGVFCTDESIKYPYREDT) are Extracellular-facing. A helical membrane pass occupies residues 54 to 74 (IPYALLGGIVIPFCIIVMITG). Over 75–88 (ETLSVYFNVLHSNS) the chain is Cytoplasmic. The chain crosses the membrane as a helical span at residues 89-109 (FVSNHYIATIYKAVGAFLFGA). At 110–164 (SASQSLTDIAKYSIGRLRPHFLAVCNPDWSKINCSDGYIENFVCQGNEQKVREGR) the chain is on the extracellular side. The tract at residues 120-128 (KYSIGRLRP) is phosphatase sequence motif I. N142 carries N-linked (GlcNAc...) asparagine glycosylation. Residues 165-185 (LSFYSGHSSFSMYCMLFVALY) traverse the membrane as a helical segment. A phosphatase sequence motif II region spans residues 168-171 (YSGH). H171 serves as the catalytic Proton donors. Residues 186-194 (LQARMKGDW) lie on the Cytoplasmic side of the membrane. Residues 195 to 215 (ARLLRPMLQFGLVALSIYVGL) traverse the membrane as a helical segment. The segment at 216-227 (SRVSDYKHHWSD) is phosphatase sequence motif III. Topologically, residues 216-229 (SRVSDYKHHWSDVL) are extracellular. Catalysis depends on H223, which acts as the Nucleophile. Residues 230 to 250 (IGLIQGAVVAILVVLYVTDFF) traverse the membrane as a helical segment. The Cytoplasmic portion of the chain corresponds to 251-282 (KTTESNKERKEDSHTTLHETTNRQSYARNHEP). The segment covering 257 to 271 (KERKEDSHTTLHETT) has biased composition (basic and acidic residues). Positions 257 to 282 (KERKEDSHTTLHETTNRQSYARNHEP) are disordered. A compositionally biased stretch (polar residues) spans 272–282 (NRQSYARNHEP).

The protein belongs to the PA-phosphatase related phosphoesterase family. In terms of assembly, forms functional homodimers and homooligomers that are not required for substrate recognition and catalytic activity. Can also form heterooligomers with PLPP2 and PLPP3. In terms of processing, N-glycosylated. N-linked sugars are of the complex type. N-glycosylation is not required for the phosphatase activity.

It is found in the cell membrane. The protein localises to the apical cell membrane. The protein resides in the membrane raft. Its subcellular location is the membrane. It localises to the caveola. It catalyses the reaction a 1,2-diacyl-sn-glycero-3-phosphate + H2O = a 1,2-diacyl-sn-glycerol + phosphate. It carries out the reaction 1,2-dihexadecanoyl-sn-glycero-3-phosphate + H2O = 1,2-dihexadecanoyl-sn-glycerol + phosphate. The catalysed reaction is 1,2-di-(9Z-octadecenoyl)-sn-glycero-3-phosphate + H2O = 1,2-di-(9Z-octadecenoyl)-sn-glycerol + phosphate. The enzyme catalyses a monoacyl-sn-glycero-3-phosphate + H2O = a monoacylglycerol + phosphate. It catalyses the reaction (9Z)-octadecenoyl-sn-glycero-3-phosphate + H2O = (9Z-octadecenoyl)-glycerol + phosphate. It carries out the reaction a 1-acyl-sn-glycero-3-phosphate + H2O = a 1-acyl-sn-glycerol + phosphate. The catalysed reaction is 1-(9Z-octadecenoyl)-sn-glycero-3-phosphate + H2O = 1-(9Z-octadecenoyl)-sn-glycerol + phosphate. The enzyme catalyses a 1,2-diacyl-sn-glycerol 3-diphosphate + H2O = a 1,2-diacyl-sn-glycero-3-phosphate + phosphate + H(+). It catalyses the reaction sphing-4-enine 1-phosphate + H2O = sphing-4-enine + phosphate. It carries out the reaction an N-acylsphing-4-enine 1-phosphate + H2O = an N-acylsphing-4-enine + phosphate. The catalysed reaction is N-(octanoyl)-sphing-4-enine-1-phosphate + H2O = N-octanoylsphing-4-enine + phosphate. The enzyme catalyses N-(9Z-octadecenoyl)-ethanolamine phosphate + H2O = N-(9Z-octadecenoyl) ethanolamine + phosphate. It catalyses the reaction 1-hexadecanoyl-2-(9Z-octadecenoyl)-sn-glycero-3-phosphate + H2O = 1-hexadecanoyl-2-(9Z-octadecenoyl)-sn-glycerol + phosphate. It participates in lipid metabolism; phospholipid metabolism. Its activity is regulated as follows. Magnesium-independent phospholipid phosphatase. Insensitive to N-ethylmaleimide. Its function is as follows. Magnesium-independent phospholipid phosphatase of the plasma membrane that catalyzes the dephosphorylation of a variety of glycerolipid and sphingolipid phosphate esters including phosphatidate/PA, lysophosphatidate/LPA, diacylglycerol pyrophosphate/DGPP, sphingosine 1-phosphate/S1P and ceramide 1-phosphate/C1P. Also acts on N-oleoyl ethanolamine phosphate/N-(9Z-octadecenoyl)-ethanolamine phosphate, a potential physiological compound. Through its extracellular phosphatase activity allows both the hydrolysis and the cellular uptake of these bioactive lipid mediators from the milieu, regulating signal transduction in different cellular processes. It is for instance essential for the extracellular hydrolysis of S1P and subsequent conversion into intracellular S1P. Involved in the regulation of inflammation, platelets activation, cell proliferation and migration among other processes. May also have an intracellular activity to regulate phospholipid-mediated signaling pathways. The chain is Phospholipid phosphatase 1 from Rattus norvegicus (Rat).